The sequence spans 90 residues: Small cysteine-rich outer membrane protein OmcA (90 aa).

The N-terminal stretch at 1 to 19 (MKKAVLIAAMFCGVVSLSS) is a signal peptide. A lipid anchor (N-palmitoyl cysteine) is attached at Cys-20. Cys-20 is lipidated: S-diacylglycerol cysteine. Residues 69–90 (TECNSQSPQVKGCTSPDGRCKQ) form a disordered region.

As to quaternary structure, part of a disulfide cross-linked outer membrane complex (COMC) composed of the major outer membrane porin (MOMP), the small cysteine-rich protein (OmcA) and the large cysteine-rich periplasmic protein (OmcB).

The protein resides in the cell outer membrane. In terms of biological role, in elementary bodies (EBs, the infectious stage, which is able to survive outside the host cell) provides the structural integrity of the outer envelope through disulfide cross-links with the large cysteine-rich periplasmic protein and the major outer membrane porin. It has been described in publications as the Sarkosyl-insoluble COMC (Chlamydia outer membrane complex), and serves as the functional equivalent of peptidoglycan. In Chlamydia pneumoniae (Chlamydophila pneumoniae), this protein is Small cysteine-rich outer membrane protein OmcA (omcA).